The following is a 238-amino-acid chain: Purine nucleoside phosphorylase DeoD-type (238 aa).

His-4 is a binding site for a purine D-ribonucleoside. Phosphate is bound by residues Gly-20, Arg-24, Arg-43, and 87-90; that span reads RVGS. A purine D-ribonucleoside-binding positions include 179-181 and 203-204; these read EME and SD. The active-site Proton donor is the Asp-204.

It belongs to the PNP/UDP phosphorylase family. As to quaternary structure, homohexamer; trimer of homodimers.

It catalyses the reaction a purine D-ribonucleoside + phosphate = a purine nucleobase + alpha-D-ribose 1-phosphate. It carries out the reaction a purine 2'-deoxy-D-ribonucleoside + phosphate = a purine nucleobase + 2-deoxy-alpha-D-ribose 1-phosphate. Its function is as follows. Catalyzes the reversible phosphorolytic breakdown of the N-glycosidic bond in the beta-(deoxy)ribonucleoside molecules, with the formation of the corresponding free purine bases and pentose-1-phosphate. The protein is Purine nucleoside phosphorylase DeoD-type of Histophilus somni (strain 129Pt) (Haemophilus somnus).